The sequence spans 400 residues: Enoyl-[acyl-carrier-protein] reductase [NADH] 2 (400 aa).

Residues 48–53 (GASSGF), 75–76 (FE), 112–113 (DA), and 141–142 (LA) contribute to the NAD(+) site. Y228 provides a ligand contact to substrate. Catalysis depends on Y238, which acts as the Proton donor. NAD(+)-binding positions include K247 and 276–278 (LVT).

Belongs to the TER reductase family. As to quaternary structure, monomer.

It carries out the reaction a 2,3-saturated acyl-[ACP] + NAD(+) = a (2E)-enoyl-[ACP] + NADH + H(+). The protein operates within lipid metabolism; fatty acid biosynthesis. In terms of biological role, involved in the final reduction of the elongation cycle of fatty acid synthesis (FAS II). Catalyzes the reduction of a carbon-carbon double bond in an enoyl moiety that is covalently linked to an acyl carrier protein (ACP). In Vibrio vulnificus (strain YJ016), this protein is Enoyl-[acyl-carrier-protein] reductase [NADH] 2.